Here is a 95-residue protein sequence, read N- to C-terminus: Aspartyl/glutamyl-tRNA(Asn/Gln) amidotransferase subunit C (95 aa).

The protein belongs to the GatC family. As to quaternary structure, heterotrimer of A, B and C subunits.

It carries out the reaction L-glutamyl-tRNA(Gln) + L-glutamine + ATP + H2O = L-glutaminyl-tRNA(Gln) + L-glutamate + ADP + phosphate + H(+). The enzyme catalyses L-aspartyl-tRNA(Asn) + L-glutamine + ATP + H2O = L-asparaginyl-tRNA(Asn) + L-glutamate + ADP + phosphate + 2 H(+). Allows the formation of correctly charged Asn-tRNA(Asn) or Gln-tRNA(Gln) through the transamidation of misacylated Asp-tRNA(Asn) or Glu-tRNA(Gln) in organisms which lack either or both of asparaginyl-tRNA or glutaminyl-tRNA synthetases. The reaction takes place in the presence of glutamine and ATP through an activated phospho-Asp-tRNA(Asn) or phospho-Glu-tRNA(Gln). This Rhodopseudomonas palustris (strain BisB5) protein is Aspartyl/glutamyl-tRNA(Asn/Gln) amidotransferase subunit C.